Reading from the N-terminus, the 459-residue chain is Trigger factor (459 aa).

The PPIase FKBP-type domain maps to 166-245; that stretch reads GDFANIDLTA…VNSVKAEELP (80 aa).

The protein belongs to the FKBP-type PPIase family. Tig subfamily.

The protein resides in the cytoplasm. The catalysed reaction is [protein]-peptidylproline (omega=180) = [protein]-peptidylproline (omega=0). Involved in protein export. Acts as a chaperone by maintaining the newly synthesized protein in an open conformation. Functions as a peptidyl-prolyl cis-trans isomerase. This is Trigger factor from Bifidobacterium longum subsp. infantis (strain ATCC 15697 / DSM 20088 / JCM 1222 / NCTC 11817 / S12).